The sequence spans 513 residues: Flavonoid 3',5'-hydroxylase (513 aa).

A heme-binding site is contributed by Cys-446.

Belongs to the cytochrome P450 family. The cofactor is heme. In terms of tissue distribution, hypocotyl tissues.

It catalyses the reaction a 3',5'-unsubstituted flavanone + 2 reduced [NADPH--hemoprotein reductase] + 2 O2 = a 3',5'-dihydroxyflavanone + 2 oxidized [NADPH--hemoprotein reductase] + 2 H2O + 2 H(+). It participates in pigment biosynthesis; anthocyanin biosynthesis. Functionally, catalyzes the 3'5'-hydroxylation of naringenin and eriodictyol to form 5,7,3,'4',5'-pentahydroxyflavanone and 3',5'-hydroxylation of dihydrokaempferol and dihydroquercetin to form dihydromyricetin. The protein is Flavonoid 3',5'-hydroxylase (CYP75A2) of Solanum melongena (Eggplant).